A 295-amino-acid polypeptide reads, in one-letter code: GTPase Era (295 aa).

Residues K7 to W176 form the Era-type G domain. The G1 stretch occupies residues G15–S22. Residue G15–S22 coordinates GTP. The interval Q41–S45 is G2. The interval D62–G65 is G3. GTP contacts are provided by residues D62–I66 and N124–D127. Residues N124–D127 are G4. Positions I152–A154 are G5. The KH type-2 domain occupies L204 to A281.

The protein belongs to the TRAFAC class TrmE-Era-EngA-EngB-Septin-like GTPase superfamily. Era GTPase family. As to quaternary structure, monomer.

It is found in the cytoplasm. It localises to the cell inner membrane. Functionally, an essential GTPase that binds both GDP and GTP, with rapid nucleotide exchange. Plays a role in 16S rRNA processing and 30S ribosomal subunit biogenesis and possibly also in cell cycle regulation and energy metabolism. This is GTPase Era from Rickettsia prowazekii (strain Madrid E).